Consider the following 251-residue polypeptide: uncharacterized protein (251 aa).

The N-terminal stretch at 1-15 (MSAISSLVLIGWAMC) is a signal peptide. N225 and N242 each carry an N-linked (GlcNAc...) asparagine glycan.

This is an uncharacterized protein from Encephalitozoon cuniculi (strain GB-M1) (Microsporidian parasite).